A 1520-amino-acid polypeptide reads, in one-letter code: Accessory colonization factor AcfD (1520 aa).

A signal peptide spans 1–16 (MKIRIVSLIVLGFLIG). The N-palmitoyl cysteine moiety is linked to residue Cys17. The S-diacylglycerol cysteine moiety is linked to residue Cys17. The region spanning 1085–1388 (GNRQPTGQWA…MFAQLKEWAE (304 aa)) is the Peptidase M60 domain.

It is found in the cell membrane. The polypeptide is Accessory colonization factor AcfD (acfD) (Vibrio cholerae serotype O1 (strain ATCC 39315 / El Tor Inaba N16961)).